We begin with the raw amino-acid sequence, 542 residues long: Anaerobic glycerol-3-phosphate dehydrogenase subunit A (542 aa).

10 to 38 is an FAD binding site; sequence DVIIIGGGATGAGIARDCALRGLRVILVE.

It belongs to the FAD-dependent glycerol-3-phosphate dehydrogenase family. As to quaternary structure, composed of a catalytic GlpA/B dimer and of membrane bound GlpC. The cofactor is FAD. FMN serves as cofactor.

It is found in the cell inner membrane. The enzyme catalyses a quinone + sn-glycerol 3-phosphate = dihydroxyacetone phosphate + a quinol. The protein operates within polyol metabolism; glycerol degradation via glycerol kinase pathway; glycerone phosphate from sn-glycerol 3-phosphate (anaerobic route): step 1/1. Functionally, conversion of glycerol 3-phosphate to dihydroxyacetone. Uses fumarate or nitrate as electron acceptor. The protein is Anaerobic glycerol-3-phosphate dehydrogenase subunit A (glpA) of Escherichia coli O157:H7.